Here is a 173-residue protein sequence, read N- to C-terminus: uncharacterized protein (173 aa).

It belongs to the ycf73 family.

The protein localises to the plastid. Its subcellular location is the chloroplast. This is an uncharacterized protein from Saccharum hybrid (Sugarcane).